A 146-amino-acid chain; its full sequence is Mitochondrial pyruvate carrier 3 (146 aa).

The transit peptide at 1-20 (MSASAFNFAFRRFWNSETGP) directs the protein to the mitochondrion. Transmembrane regions (helical) follow at residues 23 to 39 (VHFW…FAGL), 55 to 71 (LSLL…SFVI), and 78 to 94 (LASV…YHLT).

The protein belongs to the mitochondrial pyruvate carrier (MPC) (TC 2.A.105) family. As to quaternary structure, the functional 150 kDa pyruvate import complex is a heteromer of MPC1 and either MPC2 or MPC3.

The protein resides in the mitochondrion. It is found in the mitochondrion inner membrane. Its function is as follows. Mediates the uptake of pyruvate into mitochondria. The polypeptide is Mitochondrial pyruvate carrier 3 (Saccharomyces cerevisiae (strain ATCC 204508 / S288c) (Baker's yeast)).